Here is a 430-residue protein sequence, read N- to C-terminus: UDP-N-acetylglucosamine 1-carboxyvinyltransferase (430 aa).

22–23 (KN) is a binding site for phosphoenolpyruvate. Arg-102 is a binding site for UDP-N-acetyl-alpha-D-glucosamine. Cys-126 (proton donor) is an active-site residue. Residue Cys-126 is modified to 2-(S-cysteinyl)pyruvic acid O-phosphothioketal. UDP-N-acetyl-alpha-D-glucosamine contacts are provided by residues 131–135 (RPVDL), 172–175 (KVSV), Asp-317, and Ile-339.

It belongs to the EPSP synthase family. MurA subfamily.

It localises to the cytoplasm. The catalysed reaction is phosphoenolpyruvate + UDP-N-acetyl-alpha-D-glucosamine = UDP-N-acetyl-3-O-(1-carboxyvinyl)-alpha-D-glucosamine + phosphate. It participates in cell wall biogenesis; peptidoglycan biosynthesis. Cell wall formation. Adds enolpyruvyl to UDP-N-acetylglucosamine. The protein is UDP-N-acetylglucosamine 1-carboxyvinyltransferase of Allorhizobium ampelinum (strain ATCC BAA-846 / DSM 112012 / S4) (Agrobacterium vitis (strain S4)).